Here is a 1062-residue protein sequence, read N- to C-terminus: Probable sucrose-phosphate synthase 3 (1062 aa).

Over residues 113-122 (EREQGRRDAT) the composition is skewed to basic and acidic residues. The disordered stretch occupies residues 113-141 (EREQGRRDATEDLSEDLSEGEKGDGLGEI). 3 positions are modified to phosphoserine: Ser126, Ser130, and Ser156. The interval 715–735 (MDGDKPSLNGSLEPNSADPVK) is disordered.

This sequence belongs to the glycosyltransferase 1 family. In terms of assembly, homodimer or homotetramer.

It carries out the reaction beta-D-fructose 6-phosphate + UDP-alpha-D-glucose = sucrose 6(F)-phosphate + UDP + H(+). The protein operates within glycan biosynthesis; sucrose biosynthesis; sucrose from D-fructose 6-phosphate and UDP-alpha-D-glucose: step 1/2. With respect to regulation, activity is regulated by phosphorylation and moderated by concentration of metabolites and light. Plays a role in photosynthetic sucrose synthesis by catalyzing the rate-limiting step of sucrose biosynthesis from UDP-glucose and fructose- 6-phosphate. Involved in the regulation of carbon partitioning in the leaves of plants. May regulate the synthesis of sucrose and therefore play a major role as a limiting factor in the export of photoassimilates out of the leaf. Plays a role for sucrose availability that is essential for plant growth and fiber elongation. In Arabidopsis thaliana (Mouse-ear cress), this protein is Probable sucrose-phosphate synthase 3 (SPS3).